Consider the following 151-residue polypeptide: Protein-export protein SecB (151 aa).

This sequence belongs to the SecB family. In terms of assembly, homotetramer, a dimer of dimers. One homotetramer interacts with 1 SecA dimer.

It is found in the cytoplasm. Its function is as follows. One of the proteins required for the normal export of preproteins out of the cell cytoplasm. It is a molecular chaperone that binds to a subset of precursor proteins, maintaining them in a translocation-competent state. It also specifically binds to its receptor SecA. This is Protein-export protein SecB from Azoarcus sp. (strain BH72).